A 67-amino-acid polypeptide reads, in one-letter code: Teratocyte protein CftICK-II (67 aa).

Residues 1 to 25 form the signal peptide; it reads MVKSLLFAIGYLIFLLVTRVNVINA. 3 disulfides stabilise this stretch: Cys-28-Cys-42, Cys-35-Cys-46, and Cys-41-Cys-57.

Abundantly expressed by teratocytes, which are extra-embryonic cells released by parasitoid wasps into their hosts during larval eclosion.

It is found in the secreted. Functionally, this endoparasitoid wasp peptide has immununosuppressive, antimicrobial and insecticidal activities. Suppress cellular immunity which is detectable as a reduction of hemocyte encapsulation in the host. Shows moderate antifungal activity against C.albicans (MIC=4 ug/ml). In vivo, ingestion of this peptide (probably at excessive doses) increases larval mortality and reduces leaf consumption of D.saccharalis, a permissive host for C.flavipes. In Cotesia flavipes (Parasitic wasp), this protein is Teratocyte protein CftICK-II.